Reading from the N-terminus, the 246-residue chain is Protein YIPF4 (246 aa).

The Cytoplasmic portion of the chain corresponds to M1–P115. A helical transmembrane segment spans residues D116–F136. Residues R137–S140 are Lumenal-facing. Residues W141–G161 form a helical membrane-spanning segment. The Cytoplasmic segment spans residues G162–Q168. The chain crosses the membrane as a helical span at residues V169–V189. Topologically, residues V190 to S197 are lumenal. Residues T198–G218 form a helical membrane-spanning segment. The Cytoplasmic segment spans residues E219–K225. A helical membrane pass occupies residues P226–V246.

This sequence belongs to the YIP1 family. As to quaternary structure, interacts with YIPF3 and YIPF5.

It is found in the golgi apparatus. It localises to the cis-Golgi network membrane. Functionally, involved in the maintenance of the Golgi structure. This Mus musculus (Mouse) protein is Protein YIPF4 (Yipf4).